The following is a 380-amino-acid chain: Erythronate-4-phosphate dehydrogenase (380 aa).

Residues serine 45 and threonine 66 each contribute to the substrate site. Aspartate 146 lines the NAD(+) pocket. Arginine 207 is an active-site residue. Aspartate 232 provides a ligand contact to NAD(+). The active site involves glutamate 237. Residue histidine 254 is the Proton donor of the active site. Position 257 (glycine 257) interacts with NAD(+). Tyrosine 258 serves as a coordination point for substrate.

It belongs to the D-isomer specific 2-hydroxyacid dehydrogenase family. PdxB subfamily. As to quaternary structure, homodimer.

The protein localises to the cytoplasm. It catalyses the reaction 4-phospho-D-erythronate + NAD(+) = (R)-3-hydroxy-2-oxo-4-phosphooxybutanoate + NADH + H(+). Its pathway is cofactor biosynthesis; pyridoxine 5'-phosphate biosynthesis; pyridoxine 5'-phosphate from D-erythrose 4-phosphate: step 2/5. Its function is as follows. Catalyzes the oxidation of erythronate-4-phosphate to 3-hydroxy-2-oxo-4-phosphonooxybutanoate. This is Erythronate-4-phosphate dehydrogenase from Marinomonas sp. (strain MWYL1).